The primary structure comprises 334 residues: Beta-ketoacyl-[acyl-carrier-protein] synthase III (334 aa).

Active-site residues include Cys114 and His253. Positions 254 to 258 (QANIR) are ACP-binding. The active site involves Asn283.

It belongs to the thiolase-like superfamily. FabH family. Homodimer.

It is found in the cytoplasm. It carries out the reaction malonyl-[ACP] + acetyl-CoA + H(+) = 3-oxobutanoyl-[ACP] + CO2 + CoA. Its pathway is lipid metabolism; fatty acid biosynthesis. Functionally, catalyzes the condensation reaction of fatty acid synthesis by the addition to an acyl acceptor of two carbons from malonyl-ACP. Catalyzes the first condensation reaction which initiates fatty acid synthesis and may therefore play a role in governing the total rate of fatty acid production. Possesses both acetoacetyl-ACP synthase and acetyl transacylase activities. Its substrate specificity determines the biosynthesis of branched-chain and/or straight-chain of fatty acids. In Campylobacter concisus (strain 13826), this protein is Beta-ketoacyl-[acyl-carrier-protein] synthase III.